A 1055-amino-acid polypeptide reads, in one-letter code: Activated CDC42 kinase 1 (1055 aa).

Residues 1–110 form an SAM-like domain region; sequence MQPEEGTGWL…PSPTPGSLPG (110 aa). A disordered region spans residues 91–110; sequence SQHSQSTFRKPSPTPGSLPG. Phosphothreonine is present on T113. In terms of domain architecture, Protein kinase spans 126–385; that stretch reads LRLLEKLGDG…PTFVALRDFL (260 aa). Residues 132–140 and K158 contribute to the ATP site; that span reads LGDGSFGVV. The Proton acceptor role is filled by D252. Y284 is modified (phosphotyrosine; by SRC and autocatalysis). The SH3 domain occupies 388-448; that stretch reads AQPTDMRALQ…PRNVVTSVAG (61 aa). One can recognise a CRIB domain in the interval 454–466; sequence ISQPLQNSFIHTG. Residues 505–548 are disordered; that stretch reads RPTQHLGRVKREPPPRPPQPAIFTQKTTYDPVSEDPDPLSSDFK. Residues P518 and Y533 each carry the phosphotyrosine modification. The interval 638–667 is required for interaction with SRC; it reads DWDARPLPPPPAYDDVAQDEDDFEVCSINS. A required for interaction with NEDD4 region spans residues 647 to 650; it reads PPAY. The interval 737–855 is disordered; that stretch reads TGQLTPSPTP…QVIQAPGPRA (119 aa). The segment at 748-891 is EBD domain; that stretch reads GDDKPQVPPR…PYLERYQRFL (144 aa). Composition is skewed to pro residues over residues 753–764 and 787–798; these read QVPPRVPIPPRP and PASPPRVPPREP. The segment covering 817-827 has biased composition (low complexity); the sequence is PLPHRLSSSPG. At Y842 the chain carries Phosphotyrosine. The residue at position 854 (R854) is an Omega-N-methylarginine. Phosphotyrosine is present on residues Y874 and Y887. Phosphoserine is present on S896. The disordered stretch occupies residues 896 to 952; sequence SPEEPAALPVPPLLPPPSTPAPAAPTATVRPMPQAAPDPKANFSTNNSNPGARPPSL. Pro residues predominate over residues 903–918; the sequence is LPVPPLLPPPSTPAPA. Residues 973–1013 enclose the UBA domain; the sequence is PADKVQMLQAMVHGVTTEECQAALQSHSWSVQRAAQYLKVE.

This sequence belongs to the protein kinase superfamily. Tyr protein kinase family. As to quaternary structure, homodimer. Interacts with CSPG4 (activated). Interacts with MERTK (activated); stimulates autophosphorylation. May interact (phosphorylated) with HSP90AB1; maintains kinase activity. Interacts with NPHP1. Interacts with SNX9 (via SH3 domain). Interacts with SRC (via SH2 and SH3 domain). Part of a collagen stimulated complex involved in cell migration composed of CDC42, CRK, TNK2 and BCAR1/p130cas. Interacts with BCAR1/p130cas via SH3 domains. Forms complexes with GRB2 and numerous receptor tyrosine kinases (RTK) including LTK, AXL or PDGFRL, in which GRB2 promotes RTK recruitment by TNK2. Interacts with CDC42. Interacts with EGFR, and this interaction is dependent on EGF stimulation and kinase activity of EGFR. Interacts (via kinase domain) with AKT1. Interacts with NEDD4 (via WW3 domain). NEDD4L and EGF promote association with NEDD4. Mg(2+) is required as a cofactor. Autophosphorylation regulates kinase activity. Phosphorylation on Tyr-533 is required for interaction with SRC and is observed during association with clathrin-coated pits. In terms of processing, polyubiquitinated by NEDD4 and NEDD4L. Degradation can be induced by EGF and is lysosome-dependent. Ubiquitously present in all tissues tested. Highly expressed in the adult central nervous system (CNS); hippocampus, neocortex, and cerebellum, both at dendritic spines and presynaptic axon terminals. Levels are strongly increased during enhanced neural activity.

The protein resides in the cell membrane. Its subcellular location is the nucleus. It is found in the endosome. The protein localises to the cell junction. It localises to the adherens junction. The protein resides in the cytoplasmic vesicle membrane. Its subcellular location is the cytoplasmic vesicle. It is found in the clathrin-coated vesicle. The protein localises to the membrane. It localises to the clathrin-coated pit. The protein resides in the cytoplasm. Its subcellular location is the cytosol. It catalyses the reaction L-tyrosyl-[protein] + ATP = O-phospho-L-tyrosyl-[protein] + ADP + H(+). The enzyme catalyses L-seryl-[protein] + ATP = O-phospho-L-seryl-[protein] + ADP + H(+). It carries out the reaction L-threonyl-[protein] + ATP = O-phospho-L-threonyl-[protein] + ADP + H(+). Functionally, non-receptor tyrosine-protein and serine/threonine-protein kinase that is implicated in cell spreading and migration, cell survival, cell growth and proliferation. Transduces extracellular signals to cytosolic and nuclear effectors. Phosphorylates AKT1, AR, MCF2, WASL and WWOX. Implicated in trafficking and clathrin-mediated endocytosis through binding to epidermal growth factor receptor (EGFR) and clathrin. Binds to both poly- and mono-ubiquitin and regulates ligand-induced degradation of EGFR, thereby contributing to the accumulation of EGFR at the limiting membrane of early endosomes. Downstream effector of CDC42 which mediates CDC42-dependent cell migration via phosphorylation of BCAR1. May be involved both in adult synaptic function and plasticity and in brain development. Activates AKT1 by phosphorylating it on 'Tyr-176'. Phosphorylates AR on 'Tyr-267' and 'Tyr-363' thereby promoting its recruitment to androgen-responsive enhancers (AREs). Phosphorylates WWOX on 'Tyr-287'. Phosphorylates MCF2, thereby enhancing its activity as a guanine nucleotide exchange factor (GEF) toward Rho family proteins. Contributes to the control of AXL receptor levels. Confers metastatic properties on cancer cells and promotes tumor growth by negatively regulating tumor suppressor such as WWOX and positively regulating pro-survival factors such as AKT1 and AR. This chain is Activated CDC42 kinase 1 (Tnk2), found in Mus musculus (Mouse).